Here is a 59-residue protein sequence, read N- to C-terminus: Large ribosomal subunit protein bL32 (59 aa).

Residues 1 to 59 (MAVQQNKKSPSKRGMHRSHDALTAPALSVDSTTGEVHRPHHISPNGMYRGRKVVKVKGE) form a disordered region. Over residues 49–59 (RGRKVVKVKGE) the composition is skewed to basic residues.

The protein belongs to the bacterial ribosomal protein bL32 family.

In Neisseria meningitidis serogroup A / serotype 4A (strain DSM 15465 / Z2491), this protein is Large ribosomal subunit protein bL32 (rpmF).